The chain runs to 375 residues: Actin-binding Rho-activating protein (375 aa).

Basic and acidic residues-rich tracts occupy residues 1–11 (MAPGEREREAG) and 79–99 (KPDRDGEGQHSEEATEVSHIK). Disordered regions lie at residues 1–20 (MAPGEREREAGPAKSALRKV) and 38–99 (NENS…SHIK). Phosphoserine occurs at positions 150 and 182. Over residues 173–182 (QEEPTWKSDS) the composition is skewed to basic and acidic residues. Residues 173–204 (QEEPTWKSDSVDTEDSGYGGDMEERPEQDAAP) are disordered. Actin-binding regions lie at residues 193–293 (DMEE…AERA) and 294–375 (KRAE…TLLE). Interaction with actin regions lie at residues 234 to 279 (SQVD…GDEG) and 346 to 375 (MRARKHGLVHFEGEMLWQGRDDHVVITLLE).

As to quaternary structure, binds F-actin and ABLIM1, ABLIM2 and ABLIM3. Interaction with ABLIM2 and ABLIM3 enhances activity. As to expression, expressed specifically in heart and skeletal muscle.

It localises to the cytoplasm. The protein resides in the myofibril. It is found in the sarcomere. Its subcellular location is the cytoskeleton. Acts as an activator of serum response factor (SRF)-dependent transcription possibly by inducing nuclear translocation of MKL1 or MKL2 and through a mechanism requiring Rho-actin signaling. This chain is Actin-binding Rho-activating protein, found in Mus musculus (Mouse).